A 1118-amino-acid polypeptide reads, in one-letter code: Repetin (1118 aa).

Residues M1 to S91 form an S-100-like region. EF-hand domains are found at residues K13–P48 and N49–A84. Residues S27, E32, D62, D64, N66, Y68, and E73 each coordinate Ca(2+). A disordered region spans residues Y94 to Y1118. The span at S100 to S115 shows a compositional bias: basic and acidic residues. The span at S138–D148 shows a compositional bias: polar residues. 2 stretches are compositionally biased toward basic and acidic residues: residues Q149–P164 and F172–T186. A compositionally biased stretch (low complexity) spans G237–G252. Residues Y259–N299 show a composition bias toward polar residues. A run of 48 repeats spans residues Q273 to S284, Q285 to G296, Q297 to E308, Q309 to G320, Q321 to G332, Q333 to G344, Q345 to G356, Q357 to G368, Q369 to G380, Q381 to G392, Q393 to G404, Q405 to G416, Q417 to G428, Q429 to G440, Q441 to G452, Q453 to G464, Q465 to G476, Q477 to H488, R489 to G500, Q501 to G512, Q513 to H524, R525 to G536, Q537 to G548, Q549 to H560, R561 to D572, Q573 to G584, Q585 to H596, R597 to D608, Q609 to G620, Q621 to H632, Q633 to G644, H645 to G656, Q657 to G668, Q669 to G680, Q681 to G692, Q693 to G704, Q705 to G716, Q717 to G728, Q729 to G740, Q741 to G752, Q753 to G764, Q765 to H776, R777 to G788, Q789 to G800, Q801 to H812, R813 to D824, Q825 to G836, and Q837 to G848. A 48 X 12 AA approximate tandem repeats of Q-[KT]-[GD]-[RS]-Q-[DG]-Q-S-[PS]-H-X-G region spans residues Q273 to G848. Residues Q321–G764 form a 22 X 12 AA approximate tandem repeats of Q-K-G-R-Q-D-Q-S-P-H-Q-G region. 2 stretches are compositionally biased toward basic and acidic residues: residues G347–Q363 and G371–Q387. Over residues D434 to K466 the composition is skewed to polar residues. The span at G467–Q481 shows a compositional bias: basic and acidic residues. Polar residues-rich tracts occupy residues D482–Y535 and L543–H570. Composition is skewed to polar residues over residues D587–H606 and G616–Q643. Residues D710–H726 show a composition bias toward polar residues. Composition is skewed to basic and acidic residues over residues G731 to Q747 and G755 to Q769. 3 stretches are compositionally biased toward polar residues: residues L795 to H822, S833 to G848, and T855 to S864. Basic and acidic residues predominate over residues L865 to Y875. Polar residues predominate over residues V876–N889. 5 stretches are compositionally biased toward basic and acidic residues: residues S890–Q908, E947–E965, T978–N998, Q1005–Y1045, and P1056–E1065.

This sequence belongs to the S100-fused protein family. Post-translationally, potential substrate of transglutaminase. Some arginines are probably converted to citrullines by peptidylarginine deimidase. Detectable in the stratified internal epithelia of forestomach and tongue and to a lesser degree in normal skin epidermis, where it is restricted to the differentiated suprabasal cell layers. Overexpressed in skin tumors.

The protein resides in the secreted. Its subcellular location is the extracellular space. It is found in the extracellular matrix. In terms of biological role, involved in the cornified cell envelope formation. Multifunctional epidermal matrix protein. The polypeptide is Repetin (Rptn) (Mus musculus (Mouse)).